We begin with the raw amino-acid sequence, 323 residues long: COP9 signalosome complex subunit 6 (323 aa).

An MPN domain is found at 37–170 (VALHPLVILN…VSVFESVIDI (134 aa)).

Belongs to the peptidase M67A family. CSN6 subfamily. Component of the CSN complex, composed of COPS1/GPS1, COPS2, COPS3, COPS4, COPS5, COPS6, COPS7 (COPS7A or COPS7B), COPS8 and COPS9. In the complex, it probably interacts directly with COPS2, COPS4, COPS5, COPS7 (COPS7A or COPS7B) and COPS9. Interacts with the translation initiation factor EIF3S6. Interacts weakly with RBX1. Directly interacts with COP1 and 14-3-3 protein sigma/SFN. Interacts with ERCC6.

It localises to the cytoplasm. Its subcellular location is the nucleus. In terms of biological role, component of the COP9 signalosome complex (CSN), a complex involved in various cellular and developmental processes. The CSN complex is an essential regulator of the ubiquitin (Ubl) conjugation pathway by mediating the deneddylation of the cullin subunits of SCF-type E3 ligase complexes, leading to decrease the Ubl ligase activity of SCF-type complexes such as SCF, CSA or DDB2. The complex is also involved in phosphorylation of p53/TP53, c-jun/JUN, IkappaBalpha/NFKBIA, ITPK1 and IRF8, possibly via its association with CK2 and PKD kinases. CSN-dependent phosphorylation of TP53 and JUN promotes and protects degradation by the Ubl system, respectively. Has some glucocorticoid receptor-responsive activity. Stabilizes COP1 through reducing COP1 auto-ubiquitination and decelerating COP1 turnover rate, hence regulates the ubiquitination of COP1 targets, including SFN. The protein is COP9 signalosome complex subunit 6 (COPS6) of Sus scrofa (Pig).